Reading from the N-terminus, the 143-residue chain is Large ribosomal subunit protein uL13 (143 aa).

It belongs to the universal ribosomal protein uL13 family. As to quaternary structure, part of the 50S ribosomal subunit.

This protein is one of the early assembly proteins of the 50S ribosomal subunit, although it is not seen to bind rRNA by itself. It is important during the early stages of 50S assembly. In Thermoanaerobacter pseudethanolicus (strain ATCC 33223 / 39E) (Clostridium thermohydrosulfuricum), this protein is Large ribosomal subunit protein uL13.